A 130-amino-acid polypeptide reads, in one-letter code: MAIQYNYGTGRRKSAVARVFIKSGTGVITVNHKPADEYFSRETGRMIIRQPLELTGNSTNLDIMVNIRGGGESGQAGAVRHGITRALIDYDETLKSVLSKAGFVTRDAREVERKKVGFRKARRRKQFSKR.

Belongs to the universal ribosomal protein uS9 family.

This is Small ribosomal subunit protein uS9 from Nitrosomonas eutropha (strain DSM 101675 / C91 / Nm57).